A 540-amino-acid chain; its full sequence is Alanine aminotransferase 2 (540 aa).

An N6-(pyridoxal phosphate)lysine modification is found at lysine 358.

Belongs to the class-I pyridoxal-phosphate-dependent aminotransferase family. Alanine aminotransferase subfamily. As to quaternary structure, homodimer. It depends on pyridoxal 5'-phosphate as a cofactor.

It catalyses the reaction L-alanine + 2-oxoglutarate = pyruvate + L-glutamate. Its pathway is amino-acid degradation; L-alanine degradation via transaminase pathway; pyruvate from L-alanine: step 1/1. Functionally, catalyzes the reversible transamination between alanine and 2-oxoglutarate to form pyruvate and glutamate. This is Alanine aminotransferase 2 (gpt2) from Xenopus laevis (African clawed frog).